The sequence spans 457 residues: MSNLTPREIVSELDKFIIGQSDAKRMVAIAMRNRWRRQQLPPELRDEIAPKNIIMMGPTGVGKTEIARRLAKLAGCPFFKVEATKFTEVGYVGRDVESMVRDLMEIGINLVRKEEMEKVKVKAEKHAEDALLDILLPSSKPKQPGMGFFNPAAPEEQEEQPSADQSSTREKFRKMWREGKLDDREVEIEVSVQGGGVEIMSMPGMEDMGMQVNDMIGKMFPNKKKMRKVKIREAYDILIQQESDKLIDMDNVAELARERVEQGGILFLDEIDKIAGNQEGGGSANVSREGVQRDLLPVVEGCVVNTKYGMVKTDHILFISAGAFSYAKPSDLIPELQGRFPLRVELTSLDKDDFYRILTEPQNALTVQYKALLETENLNIDFSREALEEVALNAQKFNEETENIGARRLYTIMEKILSDLSFEAPDRSGDSIVIDKEYVQKQLQDVTEDRDLSRYIL.

ATP is bound by residues Ile-18 and 60–65 (GVGKTE). The tract at residues 142 to 171 (KQPGMGFFNPAAPEEQEEQPSADQSSTREK) is disordered. Residues Asp-269, Glu-335, and Arg-407 each coordinate ATP.

This sequence belongs to the ClpX chaperone family. HslU subfamily. A double ring-shaped homohexamer of HslV is capped on each side by a ring-shaped HslU homohexamer. The assembly of the HslU/HslV complex is dependent on binding of ATP.

It localises to the cytoplasm. Its function is as follows. ATPase subunit of a proteasome-like degradation complex; this subunit has chaperone activity. The binding of ATP and its subsequent hydrolysis by HslU are essential for unfolding of protein substrates subsequently hydrolyzed by HslV. HslU recognizes the N-terminal part of its protein substrates and unfolds these before they are guided to HslV for hydrolysis. The polypeptide is ATP-dependent protease ATPase subunit HslU (Maridesulfovibrio salexigens (strain ATCC 14822 / DSM 2638 / NCIMB 8403 / VKM B-1763) (Desulfovibrio salexigens)).